The chain runs to 266 residues: L-aspartate dehydrogenase (266 aa).

Positions 123 and 189 each coordinate NAD(+). Histidine 219 is a catalytic residue.

The protein belongs to the L-aspartate dehydrogenase family.

It carries out the reaction L-aspartate + NADP(+) + H2O = oxaloacetate + NH4(+) + NADPH + H(+). The enzyme catalyses L-aspartate + NAD(+) + H2O = oxaloacetate + NH4(+) + NADH + H(+). The protein operates within cofactor biosynthesis; NAD(+) biosynthesis; iminoaspartate from L-aspartate (dehydrogenase route): step 1/1. In terms of biological role, specifically catalyzes the NAD or NADP-dependent dehydrogenation of L-aspartate to iminoaspartate. The chain is L-aspartate dehydrogenase from Cupriavidus necator (strain ATCC 17699 / DSM 428 / KCTC 22496 / NCIMB 10442 / H16 / Stanier 337) (Ralstonia eutropha).